Reading from the N-terminus, the 1281-residue chain is Tubulin polyglutamylase TTLL5 (1281 aa).

In terms of domain architecture, TTL spans 62 to 407; the sequence is RYHLSYKIVR…VCQDPAQRAS (346 aa). ATP-binding positions include lysine 180, 186 to 187, 208 to 211, and 221 to 223; these read RG, SRYI, and KFD. Arginine 186 serves as a coordination point for a protein. Arginine 247 provides a ligand contact to L-glutamate. ATP is bound at residue 268 to 269; that stretch reads TN. Residues tyrosine 270, serine 271, and lysine 293 each coordinate L-glutamate. Residues aspartate 353, glutamate 366, and asparagine 368 each coordinate Mg(2+). Positions 378 to 488 are c-MTBD region; the sequence is PLDLKIKASM…RGGFIRIFPT (111 aa). L-glutamate is bound at residue lysine 384. Disordered stretches follow at residues 577-614, 1072-1114, and 1199-1281; these read MNVKTETESEEEEEVALDNEDEEQEASQEESAGFLREN, SASA…LQTG, and SSAT…HTKI. Residues 584-604 are compositionally biased toward acidic residues; the sequence is ESEEEEEVALDNEDEEQEASQ. Polar residues-rich tracts occupy residues 1086-1113, 1199-1212, 1240-1263, and 1270-1281; these read SGPTWSTQSDPQAPENHSSSPGSRSLQT, SSATASGQKPTTLP, ATSQKASKGSSAEGQLNGLQSSLN, and ITSSTDPAHTKI.

This sequence belongs to the tubulin--tyrosine ligase family. In terms of assembly, interacts with the transcriptional coactivators NCOA1/SRC-1 and NCOA2/TIF2. Mg(2+) is required as a cofactor. In terms of tissue distribution, expressed in the retina, found in the rod and cone photoreceptors (at protein level). Widely expressed with highest levels in heart and skeletal muscle and low levels in other tissues.

The protein localises to the cell projection. It localises to the cilium. Its subcellular location is the cytoplasm. The protein resides in the cytoskeleton. It is found in the cilium basal body. The protein localises to the nucleus. It catalyses the reaction L-glutamyl-[protein] + L-glutamate + ATP = gamma-L-glutamyl-L-glutamyl-[protein] + ADP + phosphate + H(+). The enzyme catalyses (L-glutamyl)(n)-gamma-L-glutamyl-L-glutamyl-[protein] + L-glutamate + ATP = (L-glutamyl)(n+1)-gamma-L-glutamyl-L-glutamyl-[protein] + ADP + phosphate + H(+). In terms of biological role, polyglutamylase which modifies tubulin, generating polyglutamate side chains on the gamma-carboxyl group of specific glutamate residues within the C-terminal tail of tubulin. Preferentially mediates ATP-dependent initiation step of the polyglutamylation reaction over the elongation step. Preferentially modifies the alpha-tubulin tail over a beta-tail. Required for CCSAP localization to both polyglutamylated spindle and cilia microtubules. Increases the effects of transcriptional coactivator NCOA2/TIF2 in glucocorticoid receptor-mediated repression and induction and in androgen receptor-mediated induction. This is Tubulin polyglutamylase TTLL5 from Homo sapiens (Human).